The following is a 569-amino-acid chain: Sulfite reductase [NADPH] hemoprotein beta-component (569 aa).

[4Fe-4S] cluster contacts are provided by C433, C439, C478, and C482. C482 contacts siroheme.

It belongs to the nitrite and sulfite reductase 4Fe-4S domain family. Alpha(8)-beta(8). The alpha component is a flavoprotein, the beta component is a hemoprotein. Requires siroheme as cofactor. It depends on [4Fe-4S] cluster as a cofactor.

The catalysed reaction is hydrogen sulfide + 3 NADP(+) + 3 H2O = sulfite + 3 NADPH + 4 H(+). It functions in the pathway sulfur metabolism; hydrogen sulfide biosynthesis; hydrogen sulfide from sulfite (NADPH route): step 1/1. In terms of biological role, component of the sulfite reductase complex that catalyzes the 6-electron reduction of sulfite to sulfide. This is one of several activities required for the biosynthesis of L-cysteine from sulfate. This is Sulfite reductase [NADPH] hemoprotein beta-component from Buchnera aphidicola subsp. Acyrthosiphon pisum (strain Tuc7).